Reading from the N-terminus, the 294-residue chain is Probable 2-(5''-triphosphoribosyl)-3'-dephosphocoenzyme-A synthase (294 aa).

The protein belongs to the CitG/MdcB family.

It catalyses the reaction 3'-dephospho-CoA + ATP = 2'-(5''-triphospho-alpha-D-ribosyl)-3'-dephospho-CoA + adenine. This Streptococcus equi subsp. zooepidemicus (strain MGCS10565) protein is Probable 2-(5''-triphosphoribosyl)-3'-dephosphocoenzyme-A synthase.